Consider the following 76-residue polypeptide: MATFDEVKEVIVDKLGVDADKVTPEARFVEDLGADSLETVELIMGLEDKFGISISDEDAEKIRTVQAAVDYIGSKQ.

A Carrier domain is found at 1-76 (MATFDEVKEV…AAVDYIGSKQ (76 aa)). The residue at position 36 (Ser36) is an O-(pantetheine 4'-phosphoryl)serine.

The protein belongs to the acyl carrier protein (ACP) family. In terms of processing, 4'-phosphopantetheine is transferred from CoA to a specific serine of apo-ACP by AcpS. This modification is essential for activity because fatty acids are bound in thioester linkage to the sulfhydryl of the prosthetic group.

It is found in the cytoplasm. It participates in lipid metabolism; fatty acid biosynthesis. Carrier of the growing fatty acid chain in fatty acid biosynthesis. The sequence is that of Acyl carrier protein from Deinococcus geothermalis (strain DSM 11300 / CIP 105573 / AG-3a).